A 106-amino-acid polypeptide reads, in one-letter code: Nucleoid-associated protein DIP0260 (106 aa).

This sequence belongs to the YbaB/EbfC family. Homodimer.

It localises to the cytoplasm. Its subcellular location is the nucleoid. Its function is as follows. Binds to DNA and alters its conformation. May be involved in regulation of gene expression, nucleoid organization and DNA protection. In Corynebacterium diphtheriae (strain ATCC 700971 / NCTC 13129 / Biotype gravis), this protein is Nucleoid-associated protein DIP0260.